Here is a 950-residue protein sequence, read N- to C-terminus: Kinase suppressor of Ras 2 (950 aa).

Residues 239-296 (PPLESGHRSLPPSPRQRHAVRTPPRTPNIVTTVTPPGTPPMRKKNKLKPPGTPPPSSR) are disordered. A compositionally biased stretch (low complexity) spans 259–273 (RTPPRTPNIVTTVTP). A phosphothreonine mark is found at Thr272 and Thr276. A Phorbol-ester/DAG-type zinc finger spans residues 412 to 456 (KHRFSTKYWMSQTCTVCGKGMLFGLKCKNCKLKCHNKCTKEAPPC). His413, Cys425, Cys428, Cys438, Cys441, His446, Cys449, and Cys456 together coordinate Zn(2+). Ser474 is subject to Phosphoserine; by MARK3. Thr497 is modified (phosphothreonine). Residues 498–556 (LPKTNKINKDHIPVPYQPDSSSNPSSTTSSTPSSPAPPLPPSATPPSPLHPSPQCTRQQ) form a disordered region. Positions 517-530 (SSSNPSSTTSSTPS) are enriched in low complexity. Residues 531-548 (SPAPPLPPSATPPSPLHP) show a composition bias toward pro residues. The Protein kinase domain maps to 666-931 (LEIGELIGKG…TKLMDMLEKL (266 aa)). 672 to 680 (IGKGRFGQV) serves as a coordination point for ATP. Catalysis depends on Asp786, which acts as the Proton donor/acceptor. The ATP site is built by Lys788 and Asp803.

It belongs to the protein kinase superfamily. TKL Ser/Thr protein kinase family. In terms of assembly, heterodimerizes (via N-terminus) with BRAF (via N-terminus) in a MAP2K1/MEK1-dependent manner. Interacts with BRAF; this increases the low intrinsic protein kinase activity of KSR2. Interacts with MAP2K1, forming a heterodimer that can dimerize to form a heterotetramer. Interacts with MAP3K8, MAPK, RAS and RAF. Phosphorylated on Ser-474 by MARK3. As to expression, mainly expressed in brain and kidney.

The protein localises to the cytoplasm. Its subcellular location is the membrane. The enzyme catalyses L-seryl-[protein] + ATP = O-phospho-L-seryl-[protein] + ADP + H(+). The catalysed reaction is L-threonyl-[protein] + ATP = O-phospho-L-threonyl-[protein] + ADP + H(+). Its activity is regulated as follows. Kinase activity is inhibited by ASC24. Its function is as follows. Location-regulated scaffold connecting MEK to RAF. Has very low protein kinase activity and can phosphorylate MAP2K1 at several Ser and Thr residues with very low efficiency (in vitro). Acts as MAP2K1/MEK1-dependent allosteric activator of BRAF; upon binding to MAP2K1/MEK1, dimerizes with BRAF and promotes BRAF-mediated phosphorylation of MAP2K1/MEK1. Interaction with BRAF enhances KSR2-mediated phosphorylation of MAP2K1 (in vitro). Blocks MAP3K8 kinase activity and MAP3K8-mediated signaling. Acts as a negative regulator of MAP3K3-mediated activation of ERK, JNK and NF-kappa-B pathways, inhibiting MAP3K3-mediated interleukin-8 production. In Homo sapiens (Human), this protein is Kinase suppressor of Ras 2.